The sequence spans 106 residues: Urease subunit beta (106 aa).

This sequence belongs to the urease beta subunit family. Heterotrimer of UreA (gamma), UreB (beta) and UreC (alpha) subunits. Three heterotrimers associate to form the active enzyme.

Its subcellular location is the cytoplasm. The enzyme catalyses urea + 2 H2O + H(+) = hydrogencarbonate + 2 NH4(+). It functions in the pathway nitrogen metabolism; urea degradation; CO(2) and NH(3) from urea (urease route): step 1/1. The protein is Urease subunit beta of Synechococcus sp. (strain WH7805).